Reading from the N-terminus, the 457-residue chain is Bifunctional protein GlmU (457 aa).

A pyrophosphorylase region spans residues 1–232 (MNNLAAVILA…PAEVMGINDR (232 aa)). Residues 9–12 (LAAG), lysine 23, glutamine 75, and 80–81 (GT) contribute to the UDP-N-acetyl-alpha-D-glucosamine site. A Mg(2+)-binding site is contributed by aspartate 105. Positions 142, 157, 172, and 230 each coordinate UDP-N-acetyl-alpha-D-glucosamine. Mg(2+) is bound at residue asparagine 230. The interval 233–253 (AQLAEAGQLLRGRINKALMLD) is linker. Positions 254–457 (GTTLIDPQTT…NKEGWKLKKK (204 aa)) are N-acetyltransferase. Residues arginine 336 and lysine 354 each coordinate UDP-N-acetyl-alpha-D-glucosamine. Histidine 366 (proton acceptor) is an active-site residue. Tyrosine 369 and asparagine 380 together coordinate UDP-N-acetyl-alpha-D-glucosamine. Residues 389-390 (NY), serine 408, alanine 426, and arginine 443 each bind acetyl-CoA.

This sequence in the N-terminal section; belongs to the N-acetylglucosamine-1-phosphate uridyltransferase family. It in the C-terminal section; belongs to the transferase hexapeptide repeat family. In terms of assembly, homotrimer. Requires Mg(2+) as cofactor.

The protein localises to the cytoplasm. The enzyme catalyses alpha-D-glucosamine 1-phosphate + acetyl-CoA = N-acetyl-alpha-D-glucosamine 1-phosphate + CoA + H(+). The catalysed reaction is N-acetyl-alpha-D-glucosamine 1-phosphate + UTP + H(+) = UDP-N-acetyl-alpha-D-glucosamine + diphosphate. Its pathway is nucleotide-sugar biosynthesis; UDP-N-acetyl-alpha-D-glucosamine biosynthesis; N-acetyl-alpha-D-glucosamine 1-phosphate from alpha-D-glucosamine 6-phosphate (route II): step 2/2. It functions in the pathway nucleotide-sugar biosynthesis; UDP-N-acetyl-alpha-D-glucosamine biosynthesis; UDP-N-acetyl-alpha-D-glucosamine from N-acetyl-alpha-D-glucosamine 1-phosphate: step 1/1. The protein operates within bacterial outer membrane biogenesis; LPS lipid A biosynthesis. Its function is as follows. Catalyzes the last two sequential reactions in the de novo biosynthetic pathway for UDP-N-acetylglucosamine (UDP-GlcNAc). The C-terminal domain catalyzes the transfer of acetyl group from acetyl coenzyme A to glucosamine-1-phosphate (GlcN-1-P) to produce N-acetylglucosamine-1-phosphate (GlcNAc-1-P), which is converted into UDP-GlcNAc by the transfer of uridine 5-monophosphate (from uridine 5-triphosphate), a reaction catalyzed by the N-terminal domain. The protein is Bifunctional protein GlmU of Geotalea uraniireducens (strain Rf4) (Geobacter uraniireducens).